Here is an 82-residue protein sequence, read N- to C-terminus: Putative membrane protein insertion efficiency factor (82 aa).

It belongs to the UPF0161 family.

It localises to the cell inner membrane. Could be involved in insertion of integral membrane proteins into the membrane. This chain is Putative membrane protein insertion efficiency factor, found in Rickettsia africae (strain ESF-5).